The primary structure comprises 546 residues: (+)-epi-alpha-bisabolol synthase (546 aa).

Mg(2+)-binding residues include Asp-297, Asp-301, Asp-441, Thr-445, and Glu-449. Positions 297–301 (DDIYD) match the DDXXD motif motif.

The protein belongs to the terpene synthase family. The cofactor is Mg(2+).

The enzyme catalyses (2E,6E)-farnesyl diphosphate + H2O = (+)-epi-alpha-bisabolol + diphosphate. The protein operates within secondary metabolite biosynthesis; terpenoid biosynthesis. Functionally, sesquiterpene synthase involved in the biosynthesis of (+)-epi-alpha-bisabolol, a precursor of the natural sweetner hernandulcin. This Phyla dulcis (Aztec sweet herb) protein is (+)-epi-alpha-bisabolol synthase.